A 244-amino-acid chain; its full sequence is ATP synthase subunit b 2 (244 aa).

Residues 2 to 22 (LIDWFTIVAQIINFLILVFLL) traverse the membrane as a helical segment.

This sequence belongs to the ATPase B chain family. F-type ATPases have 2 components, F(1) - the catalytic core - and F(0) - the membrane proton channel. F(1) has five subunits: alpha(3), beta(3), gamma(1), delta(1), epsilon(1). F(0) has four main subunits: a(1), b(1), b'(1) and c(10-14). The alpha and beta chains form an alternating ring which encloses part of the gamma chain. F(1) is attached to F(0) by a central stalk formed by the gamma and epsilon chains, while a peripheral stalk is formed by the delta, b and b' chains.

The protein resides in the cellular thylakoid membrane. In terms of biological role, f(1)F(0) ATP synthase produces ATP from ADP in the presence of a proton or sodium gradient. F-type ATPases consist of two structural domains, F(1) containing the extramembraneous catalytic core and F(0) containing the membrane proton channel, linked together by a central stalk and a peripheral stalk. During catalysis, ATP synthesis in the catalytic domain of F(1) is coupled via a rotary mechanism of the central stalk subunits to proton translocation. Component of the F(0) channel, it forms part of the peripheral stalk, linking F(1) to F(0). This is ATP synthase subunit b 2 from Crocosphaera subtropica (strain ATCC 51142 / BH68) (Cyanothece sp. (strain ATCC 51142)).